The sequence spans 492 residues: Tumor necrosis factor receptor superfamily member 8 (492 aa).

The signal sequence occupies residues 1-18 (MSILLKAAGLLFLGMLQA). The Extracellular portion of the chain corresponds to 19–282 (FPKDRPLDTT…STGTPFLDPG (264 aa)). TNFR-Cys repeat units lie at residues 57–104 (PCPQ…PRIC) and 105–141 (ECQP…NTIC). Cystine bridges form between Cys58–Cys80, Cys83–Cys96, Cys86–Cys104, and Cys123–Cys141. The tract at residues 141-178 (CDLPSPGSGPNGSNPDDCKTLTSHTTPQAIPTLESPAN) is disordered. A compositionally biased stretch (low complexity) spans 144 to 155 (PSPGSGPNGSNP). 3 N-linked (GlcNAc...) asparagine glycosylation sites follow: Asn151, Asn178, and Asn224. Residues 160-178 (TLTSHTTPQAIPTLESPAN) show a composition bias toward polar residues. A helical transmembrane segment spans residues 283 to 303 (SMLFWVAMVVLLVGSASFLLC). Residues 304 to 492 (YWKACRRRFQ…DHEPTTVSEK (189 aa)) are Cytoplasmic-facing. 2 positions are modified to phosphoserine: Ser334 and Ser348. Disordered stretches follow at residues 336–366 (PTEK…PPAV) and 432–492 (PEGR…VSEK). Residues 339-360 (KLTQLQRSGSVTDSSAGHTLSP) show a composition bias toward polar residues. 2 stretches are compositionally biased toward basic and acidic residues: residues 450 to 459 (EVDHTPHYPE) and 478 to 492 (EGGK…VSEK).

This sequence belongs to the TNFR8 family. As to quaternary structure, interacts with TRAF1, TRAF2, TRAF3 and TRAF5. Very low level of expression. Detected in spleen, thymus and lung. Highly expressed in HTLV-1 infected T-cell lines.

Its subcellular location is the cell membrane. In terms of biological role, receptor for TNFSF8/CD30L. May play a role in the regulation of cellular growth and transformation of activated lymphoblasts. Regulates gene expression through activation of NF-kappa-B. The chain is Tumor necrosis factor receptor superfamily member 8 from Rattus norvegicus (Rat).